Consider the following 360-residue polypeptide: Peptide chain release factor 1 (360 aa).

Position 235 is an N5-methylglutamine (glutamine 235). Positions 284–313 (AKRQQAEASTRRNLLGSGDRSDRNRTYNFP) are disordered.

This sequence belongs to the prokaryotic/mitochondrial release factor family. Methylated by PrmC. Methylation increases the termination efficiency of RF1.

The protein localises to the cytoplasm. In terms of biological role, peptide chain release factor 1 directs the termination of translation in response to the peptide chain termination codons UAG and UAA. The chain is Peptide chain release factor 1 from Salmonella agona (strain SL483).